A 621-amino-acid chain; its full sequence is Ubiquitin carboxyl-terminal hydrolase MINDY-2 (621 aa).

Disordered regions lie at residues 1 to 106 (MESS…RGQY) and 119 to 179 (VGHE…LESF). A Phosphoserine modification is found at Ser94. A compositionally biased stretch (low complexity) spans 145 to 163 (AAGSEEPSSAGGLSSSCSD). The active-site Nucleophile is the Cys266. The active-site Proton acceptor is the His448. The interval 507-559 (GQQDQIDQDYLMALSLQQEQQSQEINWEQIPEGISDLELAKKLQEEEDRRASQ) is ubiquitin-binding domain (UBD). Positions 556-621 (RASQYYQEQE…EKEKNSCVIL (66 aa)) are disordered. Over residues 558–591 (SQYYQEQEQAAAAAAAASTQAQQGQPAQASPSSG) the composition is skewed to low complexity. Residues 597 to 621 (SERKRKEPREKDKEKEKEKNSCVIL) are compositionally biased toward basic and acidic residues.

The protein belongs to the MINDY deubiquitinase family. FAM63 subfamily.

It carries out the reaction Thiol-dependent hydrolysis of ester, thioester, amide, peptide and isopeptide bonds formed by the C-terminal Gly of ubiquitin (a 76-residue protein attached to proteins as an intracellular targeting signal).. In terms of biological role, hydrolase that can remove 'Lys-48'-linked conjugated ubiquitin from proteins. Binds to polyubiquitin chains of different linkage types, including 'Lys-6', 'Lys-11', 'Lys-29', 'Lys-33', 'Lys-48' and 'Lys-63'. May play a regulatory role at the level of protein turnover. The chain is Ubiquitin carboxyl-terminal hydrolase MINDY-2 from Homo sapiens (Human).